We begin with the raw amino-acid sequence, 217 residues long: Phosphoenolpyruvate guanylyltransferase (217 aa).

Phosphoenolpyruvate contacts are provided by T150, G165, and S168.

Belongs to the CofC family.

The catalysed reaction is phosphoenolpyruvate + GTP + H(+) = enolpyruvoyl-2-diphospho-5'-guanosine + diphosphate. It functions in the pathway cofactor biosynthesis; coenzyme F420 biosynthesis. Functionally, guanylyltransferase that catalyzes the activation of phosphoenolpyruvate (PEP) as enolpyruvoyl-2-diphospho-5'-guanosine, via the condensation of PEP with GTP. It is involved in the biosynthesis of coenzyme F420, a hydride carrier cofactor. This chain is Phosphoenolpyruvate guanylyltransferase, found in Mycobacterium ulcerans (strain Agy99).